The chain runs to 302 residues: MSSAAESSPTPFGRLLTAMVTPFDADGCVDLALAGRLARYLVDEGSDGLVVCGTTGESPTLSWQEQHQLLGVVRQAVGPGVKVLAGTGSNSTAEAIEATTQAAAVGADGALVVVPYYNKPPQEGLEAHFRAIAQAAPELPLMLYNIPGRTGCSLAPATVARLMECPNVVSFKAASGTTDEVTQLRLQCGSKLAVYSGDDGLLLPMMSVGAVGVVSVASHLVGRRLKAMIEAYLNGQGALALSYHEQLQPLFKALFVTTNPIPVKAALELSGWPVGSPRLPLLPLDPVMRDALSNTLTALCQT.

Pyruvate is bound at residue Thr-55. Tyr-144 functions as the Proton donor/acceptor in the catalytic mechanism. The Schiff-base intermediate with substrate role is filled by Lys-172. Val-214 contributes to the pyruvate binding site.

The protein belongs to the DapA family. In terms of assembly, homotetramer; dimer of dimers.

It localises to the cytoplasm. The enzyme catalyses L-aspartate 4-semialdehyde + pyruvate = (2S,4S)-4-hydroxy-2,3,4,5-tetrahydrodipicolinate + H2O + H(+). Its pathway is amino-acid biosynthesis; L-lysine biosynthesis via DAP pathway; (S)-tetrahydrodipicolinate from L-aspartate: step 3/4. Catalyzes the condensation of (S)-aspartate-beta-semialdehyde [(S)-ASA] and pyruvate to 4-hydroxy-tetrahydrodipicolinate (HTPA). This chain is 4-hydroxy-tetrahydrodipicolinate synthase, found in Prochlorococcus marinus (strain MIT 9303).